We begin with the raw amino-acid sequence, 121 residues long: Small ribosomal subunit protein uS13 (121 aa).

The disordered stretch occupies residues 92–121 (RKGLPMRGQRTRTNARTRKGPRRAAQALKK).

The protein belongs to the universal ribosomal protein uS13 family. Part of the 30S ribosomal subunit. Forms a loose heterodimer with protein S19. Forms two bridges to the 50S subunit in the 70S ribosome.

Located at the top of the head of the 30S subunit, it contacts several helices of the 16S rRNA. In the 70S ribosome it contacts the 23S rRNA (bridge B1a) and protein L5 of the 50S subunit (bridge B1b), connecting the 2 subunits; these bridges are implicated in subunit movement. Contacts the tRNAs in the A and P-sites. This chain is Small ribosomal subunit protein uS13, found in Burkholderia cenocepacia (strain ATCC BAA-245 / DSM 16553 / LMG 16656 / NCTC 13227 / J2315 / CF5610) (Burkholderia cepacia (strain J2315)).